The chain runs to 363 residues: Fructose-bisphosphate aldolase C (363 aa).

Arg-56 and Lys-147 together coordinate substrate. Lys-230 functions as the Schiff-base intermediate with dihydroxyacetone-P in the catalytic mechanism.

It belongs to the class I fructose-bisphosphate aldolase family. In terms of assembly, homotetramer. Expressed in brain but not in liver or muscle.

The enzyme catalyses beta-D-fructose 1,6-bisphosphate = D-glyceraldehyde 3-phosphate + dihydroxyacetone phosphate. The protein operates within carbohydrate degradation; glycolysis; D-glyceraldehyde 3-phosphate and glycerone phosphate from D-glucose: step 4/4. This Carassius auratus (Goldfish) protein is Fructose-bisphosphate aldolase C (aldoc).